The sequence spans 490 residues: Betaine aldehyde dehydrogenase (490 aa).

Residue aspartate 93 participates in K(+) binding. Residue 150 to 152 (GAW) coordinates NAD(+). The active-site Charge relay system is lysine 162. 176-179 (KPSE) serves as a coordination point for NAD(+). Valine 180 is a K(+) binding site. 230–233 (GIAS) provides a ligand contact to NAD(+). Leucine 246 provides a ligand contact to K(+). The Proton acceptor role is filled by glutamate 252. Residues glycine 254, cysteine 286, and glutamate 387 each coordinate NAD(+). Residue cysteine 286 is the Nucleophile of the active site. Position 286 is a cysteine sulfenic acid (-SOH) (cysteine 286). Positions 457 and 460 each coordinate K(+). The active-site Charge relay system is the glutamate 464.

It belongs to the aldehyde dehydrogenase family. Dimer of dimers. It depends on K(+) as a cofactor.

The catalysed reaction is betaine aldehyde + NAD(+) + H2O = glycine betaine + NADH + 2 H(+). Its pathway is amine and polyamine biosynthesis; betaine biosynthesis via choline pathway; betaine from betaine aldehyde: step 1/1. Its function is as follows. Involved in the biosynthesis of the osmoprotectant glycine betaine. Catalyzes the irreversible oxidation of betaine aldehyde to the corresponding acid. The polypeptide is Betaine aldehyde dehydrogenase (Pectobacterium atrosepticum (strain SCRI 1043 / ATCC BAA-672) (Erwinia carotovora subsp. atroseptica)).